Here is a 254-residue protein sequence, read N- to C-terminus: tRNA 2'-phosphotransferase 1 (254 aa).

Met1 is subject to N-acetylmethionine. Disordered stretches follow at residues 1-30 (MNSF…DRDV) and 225-254 (RKPL…MTQQ). The segment covering 233–244 (NEEKEHQRDSKH) has biased composition (basic and acidic residues).

This sequence belongs to the KptA/TPT1 family.

The catalysed reaction is 2'-phospho-[ligated tRNA] + NAD(+) = mature tRNA + ADP-alpha-D-ribose 1'',2''-cyclic phosphate + nicotinamide. In terms of biological role, catalyzes the last step of tRNA splicing, the transfer of the splice junction 2'-phosphate from ligated tRNA to NAD to produce ADP-ribose 1''-2'' cyclic phosphate. This chain is tRNA 2'-phosphotransferase 1 (TRPT1), found in Bos taurus (Bovine).